Reading from the N-terminus, the 478-residue chain is ATP-dependent RNA helicase DDX19A (478 aa).

Ala-2 is modified (N-acetylalanine). Positions 2–299 are N-terminal lobe; the sequence is ATDSWALAVD…DPNIIKLKRE (298 aa). Lys-26 participates in a covalent cross-link: Glycyl lysine isopeptide (Lys-Gly) (interchain with G-Cter in SUMO1); alternate. Lys-26 is covalently cross-linked (Glycyl lysine isopeptide (Lys-Gly) (interchain with G-Cter in SUMO2); alternate). The tract at residues 34 to 53 is disordered; the sequence is TNGVIKTSTTAEKTEEEEKE. Thr-42 carries the phosphothreonine modification. The tract at residues 54-67 is N-terminal helix; the sequence is DRAAQSLLNKLIRS. The short motif at 91–119 is the Q motif element; that stretch reads KSFEELRLKPQLLQGVYAMGFNRPSKIQE. ATP is bound by residues Gln-118 and 137 to 144; that span reads SQSGTGKT. Positions 124–294 constitute a Helicase ATP-binding domain; that stretch reads MMLAEPPQNL…QKVVPDPNII (171 aa). The DEAD box signature appears at 241-244; that stretch reads DEAD. The C-terminal lobe stretch occupies residues 300 to 478; that stretch reads EETLDTIKQY…DLDEIEKIAN (179 aa). Residues 305 to 473 form the Helicase C-terminal domain; sequence TIKQYYVLCN…RLDTDDLDEI (169 aa). ATP-binding residues include Arg-428 and Arg-431.

Belongs to the DEAD box helicase family. DDX19/DBP5 subfamily. In terms of tissue distribution, found in testis, heart, brain, liver, skeletal muscle, and kidney.

The protein resides in the cytoplasm. Its subcellular location is the nucleus. The protein localises to the nucleoplasm. The enzyme catalyses ATP + H2O = ADP + phosphate + H(+). In terms of biological role, ATP-dependent RNA helicase involved in mRNA export from the nucleus. Rather than unwinding RNA duplexes, DDX19 functions as a remodeler of ribonucleoprotein particles, whereby proteins bound to nuclear mRNA are dissociated and replaced by cytoplasmic mRNA binding proteins. The polypeptide is ATP-dependent RNA helicase DDX19A (Ddx19a) (Mus musculus (Mouse)).